The sequence spans 817 residues: Transcription factor SPT20 homolog-like 2 (817 aa).

The segment covering 1 to 14 (MDRDLEQALDRTEN) has biased composition (basic and acidic residues). Disordered stretches follow at residues 1–28 (MDRD…RRRY), 249–275 (PQQE…ERKV), 369–553 (PRKK…AAGR), 598–630 (PGSG…AVQA), and 675–697 (QLQQ…LGLS). Over residues 423–440 (SHSSSGPASVSQLSSWKT) the composition is skewed to polar residues. Low complexity-rich tracts occupy residues 469–479 (SSSGKISSGNS), 494–505 (PAAAPAVAAAAP), 513–531 (AAPA…GAAP), and 598–618 (PGSG…SSGG).

Belongs to the SPT20 family.

The protein is Transcription factor SPT20 homolog-like 2 (SUPT20HL2) of Homo sapiens (Human).